We begin with the raw amino-acid sequence, 577 residues long: Eukaryotic translation initiation factor 3 subunit D (577 aa).

Residues 103-177 (DSTKTRFGRG…KDYDKPQRNR (75 aa)) are disordered. Basic and acidic residues predominate over residues 166–177 (GWKDYDKPQRNR). The segment at 305 to 319 (TLDMVTVNENAADAP) is RNA gate. Residues 558-577 (GSFEDDGEGDVIEENVEEED) are disordered. Residues 560-577 (FEDDGEGDVIEENVEEED) show a composition bias toward acidic residues.

This sequence belongs to the eIF-3 subunit D family. As to quaternary structure, component of the eukaryotic translation initiation factor 3 (eIF-3) complex.

The protein localises to the cytoplasm. In terms of biological role, mRNA cap-binding component of the eukaryotic translation initiation factor 3 (eIF-3) complex, which is involved in protein synthesis of a specialized repertoire of mRNAs and, together with other initiation factors, stimulates binding of mRNA and methionyl-tRNAi to the 40S ribosome. The eIF-3 complex specifically targets and initiates translation of a subset of mRNAs involved in cell proliferation. In the eIF-3 complex, eif3d specifically recognizes and binds the 7-methylguanosine cap of a subset of mRNAs. The protein is Eukaryotic translation initiation factor 3 subunit D of Sclerotinia sclerotiorum (strain ATCC 18683 / 1980 / Ss-1) (White mold).